A 1708-amino-acid polypeptide reads, in one-letter code: 187-kDa microtubule-associated protein AIR9 (1708 aa).

The segment covering 67-93 (SSLRVSGTTPVTIRRNSTGGVTENLAG) has biased composition (polar residues). The disordered stretch occupies residues 67–255 (SSLRVSGTTP…KTSTPESRDS (189 aa)). A compositionally biased stretch (basic and acidic residues) spans 110–121 (DPVRRSLPELRK). Over residues 122 to 134 (SSVSSLSAKTVSK) the composition is skewed to low complexity. The segment covering 149-165 (GSRSLTKSTGFSLSKPE) has biased composition (polar residues). The segment covering 173–234 (SVSVSSKRAP…SIRSKSFSSP (62 aa)) has biased composition (low complexity). LRR repeat units follow at residues 267–290 (AGDD…GLHL), 291–315 (SPNL…ILNR), 316–335 (VKVL…EPLE), 337–359 (CKML…LPQL), 360–382 (PNLE…SQPR), 384–402 (QVLA…FPYL), and 403–425 (PVLE…EAAS). A9 repeat units follow at residues 489-584 (PSGY…FAIS), 601-682 (LNGE…QYKY), 698-777 (ITGD…VSTS), 793-878 (IVGD…VYVL), 895-977 (ITGD…RSCM), 994-1073 (VVGA…AISE), 1090-1167 (FLGS…RSIR), 1183-1272 (IPDC…VVVI), 1287-1365 (VRVK…KMSE), 1382-1473 (FTGK…AYAE), and 1489-1569 (IEGQ…VSAS).

Interacts with KCBP. In terms of tissue distribution, strongly expressed in dividing cells, like the meristemic region of the root tip.

Its subcellular location is the cytoplasm. The protein localises to the cell cortex. It is found in the cytoskeleton. It localises to the phragmoplast. Microtubule-associated protein that may be involved in the maturation of cell plates and proper insertion of cross-walls after cytokinesis. The protein is 187-kDa microtubule-associated protein AIR9 of Arabidopsis thaliana (Mouse-ear cress).